A 527-amino-acid polypeptide reads, in one-letter code: Pentatricopeptide repeat-containing protein At4g25270, chloroplastic (527 aa).

A chloroplast-targeting transit peptide spans 1–47; sequence MVSIVVHKPSFSYPSVSSSSMKKKPRHHQQLKQHRQNQYNNNGFTSL. The interval 12–44 is disordered; it reads SYPSVSSSSMKKKPRHHQQLKQHRQNQYNNNGF. Over residues 21–35 the composition is skewed to basic residues; the sequence is MKKKPRHHQQLKQHR. 10 PPR repeats span residues 126–156, 159–193, 194–228, 229–259, 260–294, 295–326, 327–361, 367–389, 390–425, and 426–457; these read NLGI…MSKR, SPFA…GVKP, DRFT…GFGY, DVYV…IPHK, DYVS…GIEP, DKVA…GMEW, ELSV…DTVS, SAHS…NAKP, DGIT…GIDP, and KMEH…MGLE. The segment at 462 to 527 is type E motif; degenerate; that stretch reads VWGALLYACY…QMMVDRGLET (66 aa).

Belongs to the PPR family. PCMP-E subfamily.

It is found in the plastid. Its subcellular location is the chloroplast. The chain is Pentatricopeptide repeat-containing protein At4g25270, chloroplastic (PCMP-E53) from Arabidopsis thaliana (Mouse-ear cress).